Consider the following 522-residue polypeptide: Transcription factor SPT20 homolog (522 aa).

Residue serine 284 is modified to Phosphoserine. Disordered regions lie at residues 361 to 380 and 408 to 522; these read DEES…DHSN and PVKM…RHES. Low complexity predominate over residues 412–425; it reads SHSSSGSASLSQVS. The segment covering 433–442 has biased composition (polar residues); it reads TETVSVQSSV. The span at 458 to 467 shows a compositional bias: low complexity; that stretch reads SSSGNSSSGN. Positions 481–492 are enriched in pro residues; the sequence is PTPPPSSKPPTI. Phosphothreonine is present on threonine 482. Over residues 506-522 the composition is skewed to low complexity; that stretch reads LSPAALSPASSSQRHES. Residues serine 507 and serine 512 each carry the phosphoserine modification.

The protein belongs to the SPT20 family. As to quaternary structure, interacts with ATG9A. Interacts with MAPK14.

Its function is as follows. Required for MAP kinase p38 (MAPK11, MAPK12, MAPK13 and/or MAPK14) activation during gastrulation. Required for down-regulation of E-cadherin during gastrulation by regulating E-cadherin protein level downstream from NCK-interacting kinase (NIK) and independently of the regulation of transcription by FGF signaling and Snail. Required for starvation-induced ATG9A trafficking during autophagy. This chain is Transcription factor SPT20 homolog (SUPT20H), found in Pongo abelii (Sumatran orangutan).